A 977-amino-acid polypeptide reads, in one-letter code: Structural protein ORF43 (977 aa).

Residues 531-556 (DNDNINKQQQQQRERNDDDDDDDDST) form a disordered region.

The protein belongs to the ascovirus HvAV ORF146 family.

The protein resides in the virion. The chain is Structural protein ORF43 from Noctuidae (owlet moths).